Here is a 194-residue protein sequence, read N- to C-terminus: Peptidyl-tRNA hydrolase (194 aa).

Tyrosine 16 serves as a coordination point for tRNA. Catalysis depends on histidine 21, which acts as the Proton acceptor. TRNA-binding residues include phenylalanine 67, asparagine 69, and asparagine 115.

This sequence belongs to the PTH family. In terms of assembly, monomer.

Its subcellular location is the cytoplasm. It carries out the reaction an N-acyl-L-alpha-aminoacyl-tRNA + H2O = an N-acyl-L-amino acid + a tRNA + H(+). In terms of biological role, hydrolyzes ribosome-free peptidyl-tRNAs (with 1 or more amino acids incorporated), which drop off the ribosome during protein synthesis, or as a result of ribosome stalling. Catalyzes the release of premature peptidyl moieties from peptidyl-tRNA molecules trapped in stalled 50S ribosomal subunits, and thus maintains levels of free tRNAs and 50S ribosomes. The protein is Peptidyl-tRNA hydrolase of Salmonella heidelberg (strain SL476).